A 98-amino-acid polypeptide reads, in one-letter code: Integration host factor subunit alpha (98 aa).

The segment at 54-74 (LRDKSSRPGRNPKTGESVPVS) is disordered.

The protein belongs to the bacterial histone-like protein family. As to quaternary structure, heterodimer of an alpha and a beta chain.

In terms of biological role, this protein is one of the two subunits of integration host factor, a specific DNA-binding protein that functions in genetic recombination as well as in transcriptional and translational control. The sequence is that of Integration host factor subunit alpha (ihfA) from Pasteurella multocida (strain Pm70).